We begin with the raw amino-acid sequence, 127 residues long: Protein P6 (127 aa).

The protein localises to the virion membrane. This is Protein P6 (VI) from Pseudoalteromonas espejiana (Bacteriophage PM2).